The chain runs to 412 residues: 23S rRNA (uracil(747)-C(5))-methyltransferase (412 aa).

Residues Cys63, Cys69, Cys72, and Cys139 each coordinate [4Fe-4S] cluster. Gln255, Tyr281, Glu302, and Asp343 together coordinate S-adenosyl-L-methionine. Cys369 functions as the Nucleophile in the catalytic mechanism.

The protein belongs to the class I-like SAM-binding methyltransferase superfamily. RNA M5U methyltransferase family.

It carries out the reaction uridine(747) in 23S rRNA + S-adenosyl-L-methionine = 5-methyluridine(747) in 23S rRNA + S-adenosyl-L-homocysteine + H(+). Its function is as follows. Catalyzes the formation of 5-methyl-uridine at position equivalent to 747 (m5U747) in 23S rRNA. This Pyrococcus horikoshii (strain ATCC 700860 / DSM 12428 / JCM 9974 / NBRC 100139 / OT-3) protein is 23S rRNA (uracil(747)-C(5))-methyltransferase.